Reading from the N-terminus, the 89-residue chain is UPF0335 protein Nwi_0989 (89 aa).

This sequence belongs to the UPF0335 family.

This chain is UPF0335 protein Nwi_0989, found in Nitrobacter winogradskyi (strain ATCC 25391 / DSM 10237 / CIP 104748 / NCIMB 11846 / Nb-255).